The chain runs to 341 residues: Tryptophan--tRNA ligase (341 aa).

ATP is bound by residues 11–13 and 19–20; these read RPT and GH. The 'HIGH' region signature appears at 12–20; sequence PTGKLHIGH. An L-tryptophan-binding site is contributed by aspartate 140. Residues 152–154, leucine 194, and 202–206 contribute to the ATP site; these read GTD and KMSKS. Residues 202–206 carry the 'KMSKS' region motif; the sequence is KMSKS.

It belongs to the class-I aminoacyl-tRNA synthetase family. In terms of assembly, homodimer.

The protein resides in the cytoplasm. It carries out the reaction tRNA(Trp) + L-tryptophan + ATP = L-tryptophyl-tRNA(Trp) + AMP + diphosphate + H(+). Functionally, catalyzes the attachment of tryptophan to tRNA(Trp). The polypeptide is Tryptophan--tRNA ligase (Streptococcus pneumoniae serotype 4 (strain ATCC BAA-334 / TIGR4)).